The following is a 438-amino-acid chain: UDP-N-acetylmuramoylalanine--D-glutamate ligase (438 aa).

An ATP-binding site is contributed by 112–118; it reads GSNGKST.

This sequence belongs to the MurCDEF family.

It is found in the cytoplasm. The enzyme catalyses UDP-N-acetyl-alpha-D-muramoyl-L-alanine + D-glutamate + ATP = UDP-N-acetyl-alpha-D-muramoyl-L-alanyl-D-glutamate + ADP + phosphate + H(+). It participates in cell wall biogenesis; peptidoglycan biosynthesis. Cell wall formation. Catalyzes the addition of glutamate to the nucleotide precursor UDP-N-acetylmuramoyl-L-alanine (UMA). The polypeptide is UDP-N-acetylmuramoylalanine--D-glutamate ligase (Shigella dysenteriae serotype 1 (strain Sd197)).